The sequence spans 327 residues: Urokinase plasminogen activator surface receptor (327 aa).

A signal peptide spans 1 to 23; that stretch reads MGLPRRLLLLLLLATTCVPASQG. UPAR/Ly6 domains follow at residues 24–117, 117–212, and 213–298; these read LQCM…GRYL, LECA…PPNG, and FQCY…SPTG. Intrachain disulfides connect C26–C47, C29–C35, and C40–C68. Residue N32 is glycosylated (N-linked (GlcNAc...) asparagine). N75 is a glycosylation site (N-linked (GlcNAc...) asparagine). 11 disulfide bridges follow: C94–C99, C119–C146, C122–C129, C139–C168, C174–C191, C192–C197, C215–C243, C218–C226, C236–C262, C268–C287, and C288–C293. Residues N183, N193, N221, N254, and N282 are each glycosylated (N-linked (GlcNAc...) asparagine). The GPI-anchor amidated glycine moiety is linked to residue G298. A propeptide spans 299-327 (removed in mature form); sequence GAPRPGPAQLSLIASLLLTLGLWGVLLWT.

In terms of assembly, monomer. Interacts (via the UPAR/Ly6 domains) with SRPX2. Interacts with MRC2. Interacts with SORL1 (via N-terminal ectodomain); this interaction decreases PLAUR internalization. The ternary complex composed of PLAUR-PLAU-SERPINE1 also interacts with SORL1. Interacts with CD82; this interaction prevents PLAUR from binding to its high affinity ligand PLAU. Expressed in angiogenic endothelial cells (at protein level).

The protein localises to the cell membrane. It is found in the secreted. In terms of biological role, acts as a receptor for urokinase plasminogen activator. Plays a role in localizing and promoting plasmin formation. Mediates the proteolysis-independent signal transduction activation effects of U-PA. This is Urokinase plasminogen activator surface receptor (Plaur) from Mus musculus (Mouse).